A 471-amino-acid polypeptide reads, in one-letter code: Exoglucanase 2 (471 aa).

An N-terminal signal peptide occupies residues 1-18 (MIVGILTTLATLATLAAS). Residues 19-24 (VPLEER) constitute a propeptide that is removed on maturation. Residue Gln-25 is modified to Pyrrolidone carboxylic acid. In terms of domain architecture, CBM1 spans 26–62 (ACSSVWGQCGGQNWSGPTCCASGSTCVYSNDYYSQCL). Residues 64-101 (GAASSSSSTRAASTTSRVSPTTSRSSSATPPPGSTTTR) are compositionally biased toward low complexity. The disordered stretch occupies residues 64–108 (GAASSSSSTRAASTTSRVSPTTSRSSSATPPPGSTTTRVPPVGSG). Positions 66-106 (ASSSSSTRAASTTSRVSPTTSRSSSATPPPGSTTTRVPPVG) are linker. Residues 107 to 471 (SGTATYSGNP…LLTNANPSFL (365 aa)) are catalytic. O-linked (Man...) threonine glycans are attached at residues Thr-111 and Thr-121. Residues Ser-130, Ser-133, Ser-134, and Ser-139 are each glycosylated (O-linked (Man...) serine). A glycan (O-linked (Man...) threonine) is linked at Thr-146. A disulfide bridge links Cys-200 with Cys-259. Asp-245 (proton donor) is an active-site residue. Asn-313 carries an N-linked (GlcNAc) asparagine glycan. An N-linked (GlcNAc...) (high mannose) asparagine glycan is attached at Asn-334. Cys-392 and Cys-439 form a disulfide bridge.

Belongs to the glycosyl hydrolase 6 (cellulase B) family. Asn-334 contains mainly a high-mannose-type glycan (Hex(7-9)GlcNAc(2)) in a 3:1 ration with a single GlcNAc. Asn-313 was primarily unglycosylated with a small fraction (18%) bearing a single GlcNAc at this site.

Its subcellular location is the secreted. It carries out the reaction Hydrolysis of (1-&gt;4)-beta-D-glucosidic linkages in cellulose and cellotetraose, releasing cellobiose from the non-reducing ends of the chains.. Exocellobiohydrolases (CBH) that catalyzes the hydrolysis of 1,4-beta-D-glucosidic bonds in cellulose to release the disaccharide cellobiose. The degradation of cellulose involves an interplay between different cellulolytic enzymes. Hydrolysis starts with endoglucanases (EGs), which cut internal beta-1,4-glucosidic bonds in cellulose to reduce the polymerization degree of the substrate and create new chain ends for exocellobiohydrolases (CBHs). The CBHs release the disaccharide cellobiose from the non-reducing end of the cellulose polymer chain. Finally, beta-1,4-glucosidases hydrolyze the cellobiose and other short cello-oligosaccharides into glucose units. The polypeptide is Exoglucanase 2 (cbh2) (Hypocrea jecorina (Trichoderma reesei)).